The following is a 156-amino-acid chain: Small ribosomal subunit protein uS7 (156 aa).

It belongs to the universal ribosomal protein uS7 family. As to quaternary structure, part of the 30S ribosomal subunit. Contacts proteins S9 and S11.

Functionally, one of the primary rRNA binding proteins, it binds directly to 16S rRNA where it nucleates assembly of the head domain of the 30S subunit. Is located at the subunit interface close to the decoding center, probably blocks exit of the E-site tRNA. This Ligilactobacillus salivarius (strain UCC118) (Lactobacillus salivarius) protein is Small ribosomal subunit protein uS7.